We begin with the raw amino-acid sequence, 249 residues long: Proline-rich antigen (249 aa).

Pro residues-rich tracts occupy residues Met-1–Gly-20 and Tyr-38–Pro-87. The tract at residues Met-1–Pro-87 is disordered. Residues Leu-34–Ala-43 form a 1-1; approximate repeat. The interval Leu-34 to Pro-85 is 5 X 10 AA tandem repeats of [PV]-G-G-S-Y-P-P-P-P-P. Tandem repeats lie at residues Val-46 to Pro-55, Pro-56 to Pro-65, and Pro-66 to Pro-75. The 1-5; approximate repeat unit spans residues Ser-76 to Pro-85. Residues Phe-99 to Met-242 enclose the RDD domain. 2 tandem repeats follow at residues Val-101–Leu-123 and Val-134–Leu-156. The 2 X 23 AA approximate repeats stretch occupies residues Val-101–Leu-156. 3 helical membrane-spanning segments follow: residues Val-104–Ile-124, Thr-151–Trp-171, and Leu-212–Ser-232.

It belongs to the mycobacterial Pra family.

It is found in the cell membrane. This Mycobacterium leprae (strain TN) protein is Proline-rich antigen (ag36).